The following is a 118-amino-acid chain: V-type proton ATPase subunit G 3 (118 aa).

The segment covering 1 to 12 has biased composition (polar residues); the sequence is MTSQSQGIQQLL. Residues 1 to 44 form a disordered region; sequence MTSQSQGIQQLLQAEKRAKDKLDEAKKRKGKRLRQAKEEAVAET. Positions 5 to 53 form a coiled coil; that stretch reads SQGIQQLLQAEKRAKDKLDEAKKRKGKRLRQAKEEAVAETDQYRMQMEK. Basic and acidic residues predominate over residues 14–26; sequence AEKRAKDKLDEAK.

Belongs to the V-ATPase G subunit family. V-ATPase is a heteromultimeric enzyme made up of two complexes: the ATP-hydrolytic V1 complex and the proton translocation V0 complex. The V1 complex consists of three catalytic AB heterodimers that form a heterohexamer, three peripheral stalks each consisting of EG heterodimers, one central rotor including subunits D and F, and the regulatory subunits C and H. The proton translocation complex V0 consists of the proton transport subunit a, a ring of proteolipid subunits c9c'', rotary subunit d, subunits e and f, and the accessory subunits ATP6AP1/Ac45 and ATP6AP2/PRR. As to expression, kidney.

Functionally, subunit of the V1 complex of vacuolar(H+)-ATPase (V-ATPase), a multisubunit enzyme composed of a peripheral complex (V1) that hydrolyzes ATP and a membrane integral complex (V0) that translocates protons. V-ATPase is responsible for acidifying and maintaining the pH of intracellular compartments and in some cell types, is targeted to the plasma membrane, where it is responsible for acidifying the extracellular environment. This Mus musculus (Mouse) protein is V-type proton ATPase subunit G 3 (Atp6v1g3).